The following is an 847-amino-acid chain: Putative disease resistance RPP13-like protein 3 (847 aa).

A coiled-coil region spans residues 24–41; that stretch reads LMGVKDDLEELKTELTCI. The NB-ARC domain occupies 143–453; the sequence is TNVRVRQLRR…AEGFIQEDEE (311 aa). 192–199 is a binding site for ATP; sequence GMGGLGKT.

It belongs to the disease resistance NB-LRR family. RPP13 subfamily.

Functionally, potential disease resistance protein. In Arabidopsis thaliana (Mouse-ear cress), this protein is Putative disease resistance RPP13-like protein 3 (RPP13L3).